The primary structure comprises 340 residues: UDP-glucose 4-epimerase (340 aa).

NAD(+)-binding positions include 12–13 (FI), 32–37 (DNYGNS), 59–60 (DV), 81–85 (FAGLK), asparagine 100, serine 125, tyrosine 150, lysine 154, and phenylalanine 179. The substrate site is built by serine 125 and tyrosine 150. Catalysis depends on tyrosine 150, which acts as the Proton acceptor. Substrate-binding positions include asparagine 180, 200 to 201 (NL), 217 to 219 (QVY), arginine 232, and 292 to 295 (RPGD).

Belongs to the NAD(P)-dependent epimerase/dehydratase family. As to quaternary structure, homodimer. NAD(+) is required as a cofactor.

The enzyme catalyses UDP-alpha-D-glucose = UDP-alpha-D-galactose. The protein operates within carbohydrate metabolism; galactose metabolism. Involved in the metabolism of galactose. Catalyzes the conversion of UDP-galactose (UDP-Gal) to UDP-glucose (UDP-Glc) through a mechanism involving the transient reduction of NAD. Can also epimerize UDP-GalNAc to UDP-GlcNAc. Involved in the lacto-N-biose I/galacto-N-biose (LNB/GNB) degradation pathway, which is important for host intestinal colonization by bifidobacteria. This is UDP-glucose 4-epimerase (lnpD) from Bifidobacterium longum subsp. longum (strain ATCC 15707 / DSM 20219 / JCM 1217 / NCTC 11818 / E194b).